Consider the following 184-residue polypeptide: Trichothecene 15-O-acetyltransferase SAT16 (184 aa).

Residue His154 coordinates substrate.

It belongs to the trichothecene O-acetyltransferase family.

The protein operates within mycotoxin biosynthesis. Trichothecene 15-O-acetyltransferase; part of the satratoxin SC2 cluster involved in the biosynthesis of satratoxins, trichothecene mycotoxins that are associated with human food poisonings. Satratoxins are suggested to be made by products of multiple gene clusters (SC1, SC2 and SC3) that encode 21 proteins in all, including polyketide synthases, acetyltransferases, and other enzymes expected to modify the trichothecene skeleton. SC1 encodes 10 proteins, SAT1 to SAT10. The largest are SAT8, which encodes a putative polyketide synthase (PKS) with a conventional non-reducing architecture, and SAT10, a putative protein containing four ankyrin repeats and thus may be involved in protein scaffolding. The putative short-chain reductase SAT3 may assist the PKS in some capacity. SAT6 contains a secretory lipase domain and acts probably as a trichothecene esterase. SAT5 encodes a putative acetyltransferase, and so, with SAT6, may affect endogenous protection from toxicity. The probable transcription factor SAT9 may regulate the expression of the SC1 cluster. SC2 encodes proteins SAT11 to SAT16, the largest of which encodes the putative reducing PKS SAT13. SAT11 is a cytochrome P450 monooxygenase, while SAT14 and SAT16 are probable acetyltransferases. The SC2 cluster may be regulated by the transcription factor SAT15. SC3 is a small cluster that encodes 5 proteins, SAT17 to SAT21. SAT21 is a putative MFS-type transporter which may have a role in exporting secondary metabolites. The four other proteins putatively encoded in SC3 include the taurine hydroxylase-like protein SAT17, the O-methyltransferase SAT18, the acetyltransferase SAT19, and the Cys6-type zinc finger SAT20, the latter being probably involved in regulation of SC3 expression. The sequence is that of Trichothecene 15-O-acetyltransferase SAT16 from Stachybotrys chartarum (strain CBS 109288 / IBT 7711) (Toxic black mold).